A 203-amino-acid polypeptide reads, in one-letter code: Thymidylate kinase (203 aa).

Residue 7–14 (GGEGAGKT) participates in ATP binding.

Belongs to the thymidylate kinase family.

It carries out the reaction dTMP + ATP = dTDP + ADP. Its function is as follows. Phosphorylation of dTMP to form dTDP in both de novo and salvage pathways of dTTP synthesis. This Chlamydia trachomatis serovar D (strain ATCC VR-885 / DSM 19411 / UW-3/Cx) protein is Thymidylate kinase (tmk).